The following is a 123-amino-acid chain: Urotensin-2 (123 aa).

Residues 1–20 (MDRVPFCCLLFVGLLNPLLS) form the signal peptide. Residues 21–104 (FPVTDTGEMS…TVLSRLLART (84 aa)) constitute a propeptide that is removed on maturation. Residues 63 to 91 (EAEGSLGQADPSAETPTPRGSLRKALTGQ) are disordered. A disulfide bond links Cys117 and Cys122.

Belongs to the urotensin-2 family. Brain specific.

The protein localises to the secreted. In terms of biological role, highly potent vasoconstrictor. The sequence is that of Urotensin-2 (Uts2) from Rattus norvegicus (Rat).